The sequence spans 141 residues: Putative nickel-responsive regulator (141 aa).

Ni(2+) is bound by residues His80, His91, His93, and Cys99.

This sequence belongs to the transcriptional regulatory CopG/NikR family. Ni(2+) serves as cofactor.

Transcriptional regulator. In Methanococcus aeolicus (strain ATCC BAA-1280 / DSM 17508 / OCM 812 / Nankai-3), this protein is Putative nickel-responsive regulator.